We begin with the raw amino-acid sequence, 276 residues long: HTH-type transcriptional activator RhaR (276 aa).

The 99-residue stretch at 174 to 272 folds into the HTH araC/xylS-type domain; it reads ESLFSALNQS…SCTPTEYRSR (99 aa). 2 consecutive DNA-binding regions (H-T-H motif) follow at residues 191–212 and 239–262; these read ADFC…KQQT and VANI…GKTF.

Binds DNA as a dimer.

The protein resides in the cytoplasm. In terms of biological role, activates expression of the rhaSR operon in response to L-rhamnose. This Mannheimia succiniciproducens (strain KCTC 0769BP / MBEL55E) protein is HTH-type transcriptional activator RhaR.